The following is a 217-amino-acid chain: ATP phosphoribosyltransferase (217 aa).

It belongs to the ATP phosphoribosyltransferase family. Short subfamily. In terms of assembly, heteromultimer composed of HisG and HisZ subunits.

It localises to the cytoplasm. It carries out the reaction 1-(5-phospho-beta-D-ribosyl)-ATP + diphosphate = 5-phospho-alpha-D-ribose 1-diphosphate + ATP. It functions in the pathway amino-acid biosynthesis; L-histidine biosynthesis; L-histidine from 5-phospho-alpha-D-ribose 1-diphosphate: step 1/9. In terms of biological role, catalyzes the condensation of ATP and 5-phosphoribose 1-diphosphate to form N'-(5'-phosphoribosyl)-ATP (PR-ATP). Has a crucial role in the pathway because the rate of histidine biosynthesis seems to be controlled primarily by regulation of HisG enzymatic activity. In Syntrophomonas wolfei subsp. wolfei (strain DSM 2245B / Goettingen), this protein is ATP phosphoribosyltransferase.